Reading from the N-terminus, the 341-residue chain is uncharacterized protein (341 aa).

The next 3 helical transmembrane spans lie at 6–26, 63–83, and 137–157; these read IIAGLLLLTAGMIDFLWTTLW, LLLCLTLVIWISLFWSGWVLI, and AQGLLTITFSVTYLISVLSAV.

The protein localises to the cell membrane. This is an uncharacterized protein from Bacillus subtilis (strain 168).